A 294-amino-acid chain; its full sequence is PAK4-inhibitor INKA2 (294 aa).

3 disordered regions span residues 50-143 (ISGG…STLM), 170-198 (PELEKGGEKGETGEAGEPKGGRGQPRELG), and 223-290 (LKEK…DINT). A compositionally biased stretch (polar residues) spans 85-99 (SPSNQASLGSTSSGK). The segment at 134–177 (EPDDWTSTLMSRGRNRQPLVLGDNVFADLVGNWLDLPELEKGGE) is inka box. The span at 171–198 (ELEKGGEKGETGEAGEPKGGRGQPRELG) shows a compositional bias: basic and acidic residues. Over residues 241–253 (RSQKVKKRSHSKG) the composition is skewed to basic residues.

It belongs to the INKA family. Interacts with PAK4.

The protein resides in the nucleus. Its function is as follows. Inhibitor of the serine/threonine-protein kinase PAK4. Acts by binding PAK4 in a substrate-like manner, inhibiting the protein kinase activity. The sequence is that of PAK4-inhibitor INKA2 from Bos taurus (Bovine).